Consider the following 735-residue polypeptide: MSKGLYDIPSWATTETRTLAKLAGVERLFEPQYMALQAGVEKGENLVVAAPTGSGKTFIALVAIVNSLARAGGRAFYLVPLKSVAYEKYTSFSILSRMGLKLKISVGDFREGPPEAPVVIATYEKFDSLLRVSPSLARNVSVLIVDEIHSVSDPKRGPILESIVSRMLASAGEAQLVGLSATVPNAGEIAEWIGGKIVESSWRPVPLREYVFKEYKLYSPTGGLREVPRVYGLYDLDLAAEAIEDGGQALVFTYSRRRAVTLAKRAAKRLGRRLSSREARVYSAEASRAEGAPRSVAEELASLIAAGIAYHHAGLPPSLRKTVEEAFRAGAVKVVYSTPTLAAGVNLPARRVVIDSYYRYEAGFREPIRVAEYKQMAGRAGRPGLDEFGEAIIVAERLDRPEDLISGYIRAPPERVESRLAGLRGLRHFILGIVAPEGEVSIGSIEKVSGLTLYSLQRGLPRETIARAVEDLSAWGLVEVKGWRIAATSLGREVAAVYLDPESVPVFREEVKHLSFDNEFDILYLISTMPDMVRLPATRREEERLLEAILDASPRMLSSVDWLGPEEMAAVKTAVVLKLWIDEASEDTIYGEWGVHTGDLLNMVSTAEWIASGLSRIAPYLGLNSKVSHILSVIARRIKHGVKPELLQLVEIPGVGRVRARILFEAGYRSIEDLATARAEDLMRLPLIGPSTARQILEFLGRVDEAREAEAREMLARKGLLSYLEGDAVAGEEGE.

ATP-binding positions include Gln32 and 50 to 57; that span reads APTGSGKT. The 165-residue stretch at 37 to 201 folds into the Helicase ATP-binding domain; the sequence is QAGVEKGENL…WIGGKIVESS (165 aa). Residues 146 to 149 carry the DEAH box motif; the sequence is DEIH. Residues 235–431 form the Helicase C-terminal domain; that stretch reads DLDLAAEAIE…GLRGLRHFIL (197 aa).

It belongs to the helicase family. Hel308 subfamily. In terms of assembly, monomer.

It carries out the reaction Couples ATP hydrolysis with the unwinding of duplex DNA by translocating in the 3'-5' direction.. The catalysed reaction is ATP + H2O = ADP + phosphate + H(+). DNA-dependent ATPase and 3'-5' DNA helicase that may be involved in repair of stalled replication forks. The chain is ATP-dependent DNA helicase Hel308 from Aeropyrum pernix (strain ATCC 700893 / DSM 11879 / JCM 9820 / NBRC 100138 / K1).